The following is a 299-amino-acid chain: tRNA dimethylallyltransferase (299 aa).

Residue 11-18 coordinates ATP; that stretch reads GPTAVGKT. Residue 13–18 participates in substrate binding; that stretch reads TAVGKT. An interaction with substrate tRNA region spans residues 36-39; sequence DSQQ.

This sequence belongs to the IPP transferase family. In terms of assembly, monomer. Mg(2+) is required as a cofactor.

The catalysed reaction is adenosine(37) in tRNA + dimethylallyl diphosphate = N(6)-dimethylallyladenosine(37) in tRNA + diphosphate. In terms of biological role, catalyzes the transfer of a dimethylallyl group onto the adenine at position 37 in tRNAs that read codons beginning with uridine, leading to the formation of N6-(dimethylallyl)adenosine (i(6)A). This is tRNA dimethylallyltransferase from Streptococcus pyogenes serotype M18 (strain MGAS8232).